The primary structure comprises 616 residues: Dihydroxy-acid dehydratase (616 aa).

Residue Asp81 participates in Mg(2+) binding. Cys122 is a [2Fe-2S] cluster binding site. The Mg(2+) site is built by Asp123 and Lys124. An N6-carboxylysine modification is found at Lys124. Cys195 lines the [2Fe-2S] cluster pocket. Glu491 provides a ligand contact to Mg(2+). The active-site Proton acceptor is the Ser517.

Belongs to the IlvD/Edd family. In terms of assembly, homodimer. The cofactor is [2Fe-2S] cluster. Mg(2+) serves as cofactor.

The catalysed reaction is (2R)-2,3-dihydroxy-3-methylbutanoate = 3-methyl-2-oxobutanoate + H2O. It catalyses the reaction (2R,3R)-2,3-dihydroxy-3-methylpentanoate = (S)-3-methyl-2-oxopentanoate + H2O. The protein operates within amino-acid biosynthesis; L-isoleucine biosynthesis; L-isoleucine from 2-oxobutanoate: step 3/4. It participates in amino-acid biosynthesis; L-valine biosynthesis; L-valine from pyruvate: step 3/4. Its function is as follows. Functions in the biosynthesis of branched-chain amino acids. Catalyzes the dehydration of (2R,3R)-2,3-dihydroxy-3-methylpentanoate (2,3-dihydroxy-3-methylvalerate) into 2-oxo-3-methylpentanoate (2-oxo-3-methylvalerate) and of (2R)-2,3-dihydroxy-3-methylbutanoate (2,3-dihydroxyisovalerate) into 2-oxo-3-methylbutanoate (2-oxoisovalerate), the penultimate precursor to L-isoleucine and L-valine, respectively. The chain is Dihydroxy-acid dehydratase from Sodalis glossinidius (strain morsitans).